The following is a 422-amino-acid chain: Blood group Rh(D) polypeptide (422 aa).

12 helical membrane-spanning segments follow: residues Leu13–Gly33, Phe43–Phe63, Val76–Phe96, Phe113–Gly135, Val137–Ala159, Ile170–Leu190, Leu215–Leu235, Ala244–Ser266, Ile272–Ser292, Leu294–Trp314, Tyr335–Ala355, and Val372–Leu392.

The protein belongs to the ammonium transporter (TC 2.A.49) family. Rh subfamily. In terms of processing, palmitoylated.

The protein localises to the cell membrane. In terms of biological role, may be part of an oligomeric complex which is likely to have a transport or channel function in the erythrocyte membrane. This is Blood group Rh(D) polypeptide (Rhd) from Rattus norvegicus (Rat).